The chain runs to 202 residues: Large ribosomal subunit protein bL25 (202 aa).

This sequence belongs to the bacterial ribosomal protein bL25 family. CTC subfamily. Part of the 50S ribosomal subunit; part of the 5S rRNA/L5/L18/L25 subcomplex. Contacts the 5S rRNA. Binds to the 5S rRNA independently of L5 and L18.

Functionally, this is one of the proteins that binds to the 5S RNA in the ribosome where it forms part of the central protuberance. The protein is Large ribosomal subunit protein bL25 of Nitrosomonas eutropha (strain DSM 101675 / C91 / Nm57).